The chain runs to 148 residues: 3-hydroxyacyl-[acyl-carrier-protein] dehydratase FabZ (148 aa).

The active site involves His49.

This sequence belongs to the thioester dehydratase family. FabZ subfamily.

It localises to the cytoplasm. It carries out the reaction a (3R)-hydroxyacyl-[ACP] = a (2E)-enoyl-[ACP] + H2O. Its function is as follows. Involved in unsaturated fatty acids biosynthesis. Catalyzes the dehydration of short chain beta-hydroxyacyl-ACPs and long chain saturated and unsaturated beta-hydroxyacyl-ACPs. This Ehrlichia canis (strain Jake) protein is 3-hydroxyacyl-[acyl-carrier-protein] dehydratase FabZ.